The sequence spans 337 residues: Metacaspase III c (337 aa).

2 consecutive propeptides follow at residues 1-6 (MGFLRR) and 116-125 (VPPAATGTRR). C202 is modified (cysteine sulfenic acid (-SOH)). A disulfide bond links C202 and C259. H207 is a catalytic residue. Ca(2+)-binding residues include D224, D240, and D241. Residue C264 is part of the active site. Ca(2+) is bound at residue D271. Residues 290 to 337 (NFDFKKLLGKFGIDDFDKFGGEALGKINGDALGKVGKDALGKLNKFFG) constitute a propeptide that is removed on maturation.

This sequence belongs to the peptidase C14B family. Auto-proteolytic cleavage into a large and a small subunit which probably remain associated by non-covalent bonds. In terms of processing, following oxidative stress, the oxidation of Cys-202 leads to the formation of a disulfide bond between Cys-202 and Cys-259 which enhances catalytic activity.

With respect to regulation, activated by Ca(2+). Cysteine protease that cleaves specifically after arginine residues. This chain is Metacaspase III c, found in Phaeodactylum tricornutum (strain CCAP 1055/1).